The sequence spans 500 residues: Guanosine-5'-triphosphate,3'-diphosphate pyrophosphatase (500 aa).

The protein belongs to the GppA/Ppx family. GppA subfamily.

The enzyme catalyses guanosine 3'-diphosphate 5'-triphosphate + H2O = guanosine 3',5'-bis(diphosphate) + phosphate + H(+). It participates in purine metabolism; ppGpp biosynthesis; ppGpp from GTP: step 2/2. In terms of biological role, catalyzes the conversion of pppGpp to ppGpp. Guanosine pentaphosphate (pppGpp) is a cytoplasmic signaling molecule which together with ppGpp controls the 'stringent response', an adaptive process that allows bacteria to respond to amino acid starvation, resulting in the coordinated regulation of numerous cellular activities. The protein is Guanosine-5'-triphosphate,3'-diphosphate pyrophosphatase of Photorhabdus laumondii subsp. laumondii (strain DSM 15139 / CIP 105565 / TT01) (Photorhabdus luminescens subsp. laumondii).